Here is a 447-residue protein sequence, read N- to C-terminus: Probable cytosol aminopeptidase (447 aa).

2 residues coordinate Mn(2+): K218 and D223. Residue K230 is part of the active site. Residues D241, D300, and E302 each coordinate Mn(2+). Residue R304 is part of the active site.

This sequence belongs to the peptidase M17 family. Mn(2+) is required as a cofactor.

Its subcellular location is the cytoplasm. The catalysed reaction is Release of an N-terminal amino acid, Xaa-|-Yaa-, in which Xaa is preferably Leu, but may be other amino acids including Pro although not Arg or Lys, and Yaa may be Pro. Amino acid amides and methyl esters are also readily hydrolyzed, but rates on arylamides are exceedingly low.. The enzyme catalyses Release of an N-terminal amino acid, preferentially leucine, but not glutamic or aspartic acids.. Functionally, presumably involved in the processing and regular turnover of intracellular proteins. Catalyzes the removal of unsubstituted N-terminal amino acids from various peptides. This Mycoplasma genitalium (strain ATCC 33530 / DSM 19775 / NCTC 10195 / G37) (Mycoplasmoides genitalium) protein is Probable cytosol aminopeptidase (pepA).